A 545-amino-acid chain; its full sequence is Threonine--tRNA ligase catalytic subunit (545 aa).

Residues 139 to 433 are catalytic; it reads DHRLIGEKLD…LLEHFKGKLP (295 aa). The Zn(2+) site is built by C231, H282, and H410.

This sequence belongs to the class-II aminoacyl-tRNA synthetase family. In terms of assembly, homodimer. Probably interacts with its editing subunit. Zn(2+) serves as cofactor.

It is found in the cytoplasm. It catalyses the reaction tRNA(Thr) + L-threonine + ATP = L-threonyl-tRNA(Thr) + AMP + diphosphate + H(+). Functionally, catalyzes the attachment of threonine to tRNA(Thr) in a two-step reaction: L-threonine is first activated by ATP to form Thr-AMP and then transferred to the acceptor end of tRNA(Thr). Also activates L-serine and transfers it to tRNA(Thr) but cannot deacylate incorrectly charged amino acid; unlike most archaea the editing function is found in a freestanding protein. The chain is Threonine--tRNA ligase catalytic subunit from Saccharolobus islandicus (strain L.S.2.15 / Lassen #1) (Sulfolobus islandicus).